A 642-amino-acid polypeptide reads, in one-letter code: Threonine--tRNA ligase (642 aa).

The 61-residue stretch at 1–61 (MPIITLPDGS…STDSDLSIIT (61 aa)) folds into the TGS domain. Positions 243–534 (DHRKIGKQLD…LIEEYAGKFP (292 aa)) are catalytic. The Zn(2+) site is built by Cys-334, His-385, and His-511.

Belongs to the class-II aminoacyl-tRNA synthetase family. As to quaternary structure, homodimer. The cofactor is Zn(2+).

Its subcellular location is the cytoplasm. It catalyses the reaction tRNA(Thr) + L-threonine + ATP = L-threonyl-tRNA(Thr) + AMP + diphosphate + H(+). Its function is as follows. Catalyzes the attachment of threonine to tRNA(Thr) in a two-step reaction: L-threonine is first activated by ATP to form Thr-AMP and then transferred to the acceptor end of tRNA(Thr). Also edits incorrectly charged L-seryl-tRNA(Thr). In Shewanella denitrificans (strain OS217 / ATCC BAA-1090 / DSM 15013), this protein is Threonine--tRNA ligase.